A 156-amino-acid chain; its full sequence is Large ribosomal subunit protein uL13 (156 aa).

This sequence belongs to the universal ribosomal protein uL13 family. Part of the 50S ribosomal subunit.

In terms of biological role, this protein is one of the early assembly proteins of the 50S ribosomal subunit, although it is not seen to bind rRNA by itself. It is important during the early stages of 50S assembly. In Archaeoglobus fulgidus (strain ATCC 49558 / DSM 4304 / JCM 9628 / NBRC 100126 / VC-16), this protein is Large ribosomal subunit protein uL13.